The chain runs to 295 residues: Structure-specific endonuclease subunit SLX1 (295 aa).

Positions 11–93 (EFYGVYILQS…QHPKTSRHMA (83 aa)) constitute a GIY-YIG domain. The segment at 85 to 133 (HPKTSRHMAGGGGSVTATAETAKSAPVAGKSDATSPAKNRRNAAPVARS) is disordered. The segment at 205–272 (CCLCSDAIDY…IPSDVSCSQC (68 aa)) adopts an SLX1-type zinc-finger fold.

This sequence belongs to the SLX1 family. Forms a heterodimer with SLX4. Requires a divalent metal cation as cofactor.

The protein localises to the nucleus. In terms of biological role, catalytic subunit of the SLX1-SLX4 structure-specific endonuclease that resolves DNA secondary structures generated during DNA repair and recombination. Has endonuclease activity towards branched DNA substrates, introducing single-strand cuts in duplex DNA close to junctions with ss-DNA. The polypeptide is Structure-specific endonuclease subunit SLX1 (Meyerozyma guilliermondii (strain ATCC 6260 / CBS 566 / DSM 6381 / JCM 1539 / NBRC 10279 / NRRL Y-324) (Yeast)).